The following is a 134-amino-acid chain: Large ribosomal subunit protein uL16c (134 aa).

The protein belongs to the universal ribosomal protein uL16 family. In terms of assembly, part of the 50S ribosomal subunit.

It localises to the plastid. The protein resides in the chloroplast. The chain is Large ribosomal subunit protein uL16c from Pinus koraiensis (Korean pine).